The primary structure comprises 199 residues: NAD(P)H dehydrogenase (quinone) (199 aa).

In terms of domain architecture, Flavodoxin-like spans Val-4–Val-190. Residues Ser-10–Val-15 and Thr-78–Tyr-80 contribute to the FMN site. Position 12 (Trp-12) interacts with NAD(+). Position 98 (Trp-98) interacts with substrate. FMN-binding positions include Ser-113–Gly-119 and His-134.

It belongs to the WrbA family. The cofactor is FMN.

The catalysed reaction is a quinone + NADH + H(+) = a quinol + NAD(+). The enzyme catalyses a quinone + NADPH + H(+) = a quinol + NADP(+). The chain is NAD(P)H dehydrogenase (quinone) from Methylorubrum extorquens (strain CM4 / NCIMB 13688) (Methylobacterium extorquens).